We begin with the raw amino-acid sequence, 325 residues long: Phospho-N-acetylmuramoyl-pentapeptide-transferase (325 aa).

Transmembrane regions (helical) follow at residues 7–27, 57–77, 81–101, 122–142, 146–166, 186–206, 227–247, 252–272, and 302–322; these read LFVLILSFAAAVIMSPLFIPF, IVIVLSIFISALAIGIAITGF, LLLLMVVTLGYGIVGFVDDYL, VIAAIFYIGLLAIGFDTFIAI, TFGFDLGWLYLILIVLMLLGA, IAFGAFAILAWSGGFIDTALF, VFMGDTGSLALGGAIAAIAIL, LMLIIVGGVFVIETLSVIIQV, and VVVTFWLVGMIFAIMGVYIGV.

It belongs to the glycosyltransferase 4 family. MraY subfamily. Mg(2+) serves as cofactor.

The protein localises to the cell membrane. It catalyses the reaction UDP-N-acetyl-alpha-D-muramoyl-L-alanyl-gamma-D-glutamyl-meso-2,6-diaminopimeloyl-D-alanyl-D-alanine + di-trans,octa-cis-undecaprenyl phosphate = di-trans,octa-cis-undecaprenyl diphospho-N-acetyl-alpha-D-muramoyl-L-alanyl-D-glutamyl-meso-2,6-diaminopimeloyl-D-alanyl-D-alanine + UMP. It participates in cell wall biogenesis; peptidoglycan biosynthesis. Functionally, catalyzes the initial step of the lipid cycle reactions in the biosynthesis of the cell wall peptidoglycan: transfers peptidoglycan precursor phospho-MurNAc-pentapeptide from UDP-MurNAc-pentapeptide onto the lipid carrier undecaprenyl phosphate, yielding undecaprenyl-pyrophosphoryl-MurNAc-pentapeptide, known as lipid I. The protein is Phospho-N-acetylmuramoyl-pentapeptide-transferase of Shouchella clausii (strain KSM-K16) (Alkalihalobacillus clausii).